The primary structure comprises 370 residues: Queuine tRNA-ribosyltransferase (370 aa).

D89 serves as the catalytic Proton acceptor. Substrate is bound by residues 89–93, D143, Q185, and G212; that span reads DSGGF. The tract at residues 243-249 is RNA binding; that stretch reads GVGKPED. D262 serves as the catalytic Nucleophile. An RNA binding; important for wobble base 34 recognition region spans residues 267–271; the sequence is TRNAR. The Zn(2+) site is built by C300, C302, C305, and H331.

This sequence belongs to the queuine tRNA-ribosyltransferase family. In terms of assembly, homodimer. Within each dimer, one monomer is responsible for RNA recognition and catalysis, while the other monomer binds to the replacement base PreQ1. The cofactor is Zn(2+).

The catalysed reaction is 7-aminomethyl-7-carbaguanine + guanosine(34) in tRNA = 7-aminomethyl-7-carbaguanosine(34) in tRNA + guanine. Its pathway is tRNA modification; tRNA-queuosine biosynthesis. Its function is as follows. Catalyzes the base-exchange of a guanine (G) residue with the queuine precursor 7-aminomethyl-7-deazaguanine (PreQ1) at position 34 (anticodon wobble position) in tRNAs with GU(N) anticodons (tRNA-Asp, -Asn, -His and -Tyr). Catalysis occurs through a double-displacement mechanism. The nucleophile active site attacks the C1' of nucleotide 34 to detach the guanine base from the RNA, forming a covalent enzyme-RNA intermediate. The proton acceptor active site deprotonates the incoming PreQ1, allowing a nucleophilic attack on the C1' of the ribose to form the product. After dissociation, two additional enzymatic reactions on the tRNA convert PreQ1 to queuine (Q), resulting in the hypermodified nucleoside queuosine (7-(((4,5-cis-dihydroxy-2-cyclopenten-1-yl)amino)methyl)-7-deazaguanosine). In Hydrogenovibrio crunogenus (strain DSM 25203 / XCL-2) (Thiomicrospira crunogena), this protein is Queuine tRNA-ribosyltransferase.